The chain runs to 353 residues: H(2)-forming methylenetetrahydromethanopterin dehydrogenase-related protein MJ1338 (353 aa).

This sequence belongs to the HMD family.

This Methanocaldococcus jannaschii (strain ATCC 43067 / DSM 2661 / JAL-1 / JCM 10045 / NBRC 100440) (Methanococcus jannaschii) protein is H(2)-forming methylenetetrahydromethanopterin dehydrogenase-related protein MJ1338.